A 740-amino-acid polypeptide reads, in one-letter code: MIFKSLKIFPFYQIYGFRFLKGMIFKKKIHLSKLNKNHDLIHIHSLTLKSIVGKNSWAQRLLQPVVLTLSMGINASLSGNMDDLSYSIDYATVYKEVFKLVENSKFENLLDLSDKISKVVLGDKCKGNWVKVIAETPKGHLLAETGLQIIRRKDGIREIDDQFFIKNLSLYTIIGINPEERVNKQNIIIDLILFKSSINLECKDDFIINTYNIEKLLKEIVKHVEESTFKTIEALALSIARISCISHNIEKIIVKVKKSCALAFAESAGVEIVRSRSCFSSNNYIKSENSIDNEAVYISLGSNLGNRIKFILDAIEKMSIKGIKVLKTSMLYESKPMYFKDQPAFYNAVCKVQTSLHPEQLLFELQLIEKELGRVKVIDKGPRCIDLDIVFYGRKIINSESLIIPHPRVLERSFVLKPLLDISGDLVHPVTGLSIASYFEKIVDHDIKPVLPFLYKNKSIDFSFRSYKAPTYIMAILNLTPDSFFDGGIHSYDSVLIDVEKFINAGATIIDIGGQSTRPGSYIIPLEEEIFRVIPAIKYLQKTYPDILISIDTFRSEVAEQAVKAGASLVNDISGGRYDPKMFNTVARLKVPICIMHMRGNFLNMDNLTDYGTDIIEQITIELEKLLNSAEKSGIPRWNIILDPGLGFSKTLHQNIELLRRFNELKSKNCFNGLPWLLGPSRKRFTGFITGDNMPKDRIWGTVAAVVASISGGCDIIRVHDVYEMYKISKMSDAIWKEIY.

DHNA stretches follow at residues 39 to 160 (DLIH…REID) and 161 to 280 (DQFF…SCFS). Residues 291 to 449 (IDNEAVYISL…EKIVDHDIKP (159 aa)) are HPPK. In terms of domain architecture, Pterin-binding spans 471–730 (TYIMAILNLT…DVYEMYKISK (260 aa)). The interval 473 to 740 (IMAILNLTPD…MSDAIWKEIY (268 aa)) is DHPS. Mg(2+) is bound at residue Asn-478. (7,8-dihydropterin-6-yl)methyl diphosphate-binding positions include Thr-517, Asp-552, Asn-571, Asp-643, Lys-683, and 718-720 (RVH).

This sequence in the N-terminal section; belongs to the DHNA family. The protein in the central section; belongs to the HPPK family. It in the C-terminal section; belongs to the DHPS family. It depends on Mg(2+) as a cofactor.

It catalyses the reaction 7,8-dihydroneopterin = 6-hydroxymethyl-7,8-dihydropterin + glycolaldehyde. It carries out the reaction 6-hydroxymethyl-7,8-dihydropterin + ATP = (7,8-dihydropterin-6-yl)methyl diphosphate + AMP + H(+). The catalysed reaction is (7,8-dihydropterin-6-yl)methyl diphosphate + 4-aminobenzoate = 7,8-dihydropteroate + diphosphate. It functions in the pathway cofactor biosynthesis; tetrahydrofolate biosynthesis; 2-amino-4-hydroxy-6-hydroxymethyl-7,8-dihydropteridine diphosphate from 7,8-dihydroneopterin triphosphate: step 3/4. Its pathway is cofactor biosynthesis; tetrahydrofolate biosynthesis; 2-amino-4-hydroxy-6-hydroxymethyl-7,8-dihydropteridine diphosphate from 7,8-dihydroneopterin triphosphate: step 4/4. The protein operates within cofactor biosynthesis; tetrahydrofolate biosynthesis; 7,8-dihydrofolate from 2-amino-4-hydroxy-6-hydroxymethyl-7,8-dihydropteridine diphosphate and 4-aminobenzoate: step 1/2. Catalyzes three sequential steps of tetrahydrofolate biosynthesis. This Pneumocystis carinii protein is Folic acid synthesis protein fol1 (fol1).